The chain runs to 305 residues: Nod factor export ATP-binding protein I (305 aa).

Positions 8 to 237 (IDLVGVRKSF…HIGCNVIEIY (230 aa)) constitute an ABC transporter domain. 40–47 (GPNGAGKS) provides a ligand contact to ATP.

This sequence belongs to the ABC transporter superfamily. Lipooligosaccharide exporter (TC 3.A.1.102) family. In terms of assembly, the complex is composed of two ATP-binding proteins (NodI) and two transmembrane proteins (NodJ).

Its subcellular location is the cell inner membrane. In terms of biological role, part of the ABC transporter complex NodIJ involved in the export of the nodulation factors (Nod factors), the bacterial signal molecules that induce symbiosis and subsequent nodulation induction. Nod factors are LCO (lipo-chitin oligosaccharide), a modified beta-1,4-linked N-acetylglucosamine oligosaccharide. This subunit is responsible for energy coupling to the transport system. The polypeptide is Nod factor export ATP-binding protein I (Bradyrhizobium sp. (strain SNU001)).